An 881-amino-acid chain; its full sequence is Putative cation exchanger C521.04c (881 aa).

The segment covering 1–19 (MSQPADINQSESSAETITQ) has biased composition (polar residues). Disordered stretches follow at residues 1–39 (MSQP…EQNL) and 52–142 (ADAT…LRSE). Residues 63–77 (NDRDIYSPREIDQYT) show a composition bias toward basic and acidic residues. The span at 83–95 (RTDPSTSTISNAR) shows a compositional bias: polar residues. The span at 99–113 (RNSVSRLSRSSSNVR) shows a compositional bias: low complexity. Ser129 carries the phosphoserine modification. 8 consecutive transmembrane segments (helical) span residues 200 to 220 (IWLI…YIFF), 329 to 349 (LIIA…IFFV), 407 to 427 (IYII…FGFF), 438 to 458 (VFLF…IGMA), 471 to 491 (GAFI…SVAL), 504 to 524 (IGSI…AGAI), 537 to 557 (GATS…TMLF), and 594 to 614 (LPFT…GLWF). The interval 641–717 (VGEPVNQDTA…SQNSHGDDAP (77 aa)) is disordered. A compositionally biased stretch (polar residues) spans 646–657 (NQDTAGNMSDSS). Over residues 678–688 (SSGLSSNGSEN) the composition is skewed to low complexity. 5 helical membrane-spanning segments follow: residues 726-746 (IILL…VEHV), 762-782 (LTLF…SFAL), 794-814 (SAYA…YSLF), 828-848 (LFTM…VFLL), and 859-879 (YFKG…FTFF).

The protein belongs to the Ca(2+):cation antiporter (CaCA) (TC 2.A.19) family.

It is found in the endoplasmic reticulum membrane. Its function is as follows. Putative cation exchanger. In Schizosaccharomyces pombe (strain 972 / ATCC 24843) (Fission yeast), this protein is Putative cation exchanger C521.04c.